Consider the following 502-residue polypeptide: Reduced meiotic recombination protein C1442.04c (502 aa).

Phosphoserine occurs at positions 328, 330, and 331. Disordered regions lie at residues 353 to 391 (NDLN…LRDN), 420 to 440 (GSLN…ENVD), and 454 to 502 (ESAF…PSDD). Residues 367 to 378 (DGSEIITLDEND) show a composition bias toward acidic residues. Polar residues-rich tracts occupy residues 420-436 (GSLN…TNDG) and 462-477 (GTIN…TTDT).

It belongs to the RMR1 family.

Its subcellular location is the cytoplasm. It is found in the nucleus. In terms of biological role, required for normal levels of gene conversion events during meiosis. The chain is Reduced meiotic recombination protein C1442.04c from Schizosaccharomyces pombe (strain 972 / ATCC 24843) (Fission yeast).